A 341-amino-acid polypeptide reads, in one-letter code: Ribosomal RNA small subunit methyltransferase C (341 aa).

This sequence belongs to the methyltransferase superfamily. RsmC family. In terms of assembly, monomer.

It is found in the cytoplasm. The catalysed reaction is guanosine(1207) in 16S rRNA + S-adenosyl-L-methionine = N(2)-methylguanosine(1207) in 16S rRNA + S-adenosyl-L-homocysteine + H(+). In terms of biological role, specifically methylates the guanine in position 1207 of 16S rRNA in the 30S particle. The sequence is that of Ribosomal RNA small subunit methyltransferase C from Pseudoalteromonas translucida (strain TAC 125).